We begin with the raw amino-acid sequence, 313 residues long: Carbamate kinase 2 (313 aa).

This sequence belongs to the carbamate kinase family.

The protein resides in the cytoplasm. It catalyses the reaction hydrogencarbonate + NH4(+) + ATP = carbamoyl phosphate + ADP + H2O + H(+). It functions in the pathway metabolic intermediate metabolism; carbamoyl phosphate degradation; CO(2) and NH(3) from carbamoyl phosphate: step 1/1. This is Carbamate kinase 2 (arcC2) from Staphylococcus aureus (strain MRSA252).